The following is a 656-amino-acid chain: Ribosome quality control complex subunit 1 (656 aa).

The segment covering 1–11 (MSSRALRKLQR) has biased composition (basic residues). Disordered regions lie at residues 1–35 (MSSRALRKLQRQRQTELLEEALDSESDEDDEFSST), 51–122 (NNAI…LESS), and 634–656 (LFTSTNSETEPAEESTEEMGQGD). Positions 17-32 (LLEEALDSESDEDDEF) are enriched in acidic residues. Residues 51 to 63 (NNAINSEAEKSVS) show a composition bias toward basic and acidic residues. S56, S61, and S63 each carry phosphoserine. Over residues 83-101 (KKAKNKKKKKKQQKKKKVT) the composition is skewed to basic residues. Residues 102 to 122 (GKRDLDNQSSDNEKLEGLESS) show a composition bias toward basic and acidic residues. Phosphoserine occurs at positions 110 and 111.

The protein belongs to the TCF25 family. In terms of assembly, component of the ribosome quality control complex (RQC), composed of the E3 ubiquitin ligase rkr1/ltn1, rqc1 and mtr1/rqc2, as well as cdc48 and its ubiquitin-binding cofactors. RQC forms a stable complex with 60S ribosomal subunits.

Its subcellular location is the cytoplasm. Its function is as follows. Component of the ribosome quality control complex (RQC), a ribosome-associated complex that mediates ubiquitination and extraction of incompletely synthesized nascent chains for proteasomal degradation. Within the RQC complex, rqc1 is essential for the recruitment of cdc48 to incompletely synthesized nascent polypeptides that are ubiquitinated by rkr1/ltn1. This chain is Ribosome quality control complex subunit 1, found in Schizosaccharomyces pombe (strain 972 / ATCC 24843) (Fission yeast).